The chain runs to 328 residues: Putative glycosyltransferase 41 (328 aa).

It belongs to the glycosyltransferase group 1 family. Glycosyltransferase 4 subfamily.

The chain is Putative glycosyltransferase 41 (SIFV0041) from Sulfolobus islandicus filamentous virus (isolate Iceland/Hveragerdi) (SIFV).